The sequence spans 81 residues: Defensin-like protein b (81 aa).

The N-terminal stretch at 1–26 (MRNATFFIVFYVFISLVLSNVQDVTA) is a signal peptide. Cystine bridges form between Cys-31–Cys-81, Cys-42–Cys-66, Cys-50–Cys-76, and Cys-64–Cys-78.

The protein belongs to the DEFL family. In terms of tissue distribution, expressed in microspores and in young and mature anthers.

Its subcellular location is the secreted. Involved in self-incompatibility. The chain is Defensin-like protein b (SCRb-1) from Arabidopsis lyrata (Lyre-leaved rock-cress).